The chain runs to 758 residues: MIIRSPEPKVQILADPEVKILVDRDPIKTSFEQWAKPGHFSRTIAKGPDTTTWIWNLHADAHDFDSHTSDLEEISRKVFSAHFGQLSIIFLWLSGMYFHGARFSNYEAWLNDPTHIGPSAQVVWPIVGQEILNGDVGGGFRGIQITSGFFQIWRASGITSELQLYCTAIGALVFAGLMLFAGWFHYHKAAPKLAWFQDVESMLNHHLAGLLGLGSLSWARHQVHVSLPINQFLNAGVDPKEIPLPHEFILNRDLLAQLYPSFAEGATPFFTLNWSKYADFLTFRGGLDPLTGGLWLTDIAHHHLAIAILFLIAGHMYRTNWGIGHGIKDILEAHKGPFTGQGHKGLYEILTTSWHAQLSINLAMLGSLTIVVAQHMYSMPPYPYLATDYATQLSLFTHHMWIGGFLIVGAAAHAAIFMVRDYDPTTRYNDLLDRVLRHRDAIISHLNWVCIFLGFHSFGLYIHNDTMSALGRPQDMFSDTAIQLQPVFAQWIQNTHALAPGTTAPGATASTSLTWGGGDLVAVGNKVALLPIPLGTADFLVHHIHAFTIHVTVLILLKGVLFARSSRLIPDKANLGFRFPCDGPGRGGTCQVSAWDHVFLGLFWMYNSISVVIFHFSWKMQSDVWGTINDQGVVTHITAGNFAQSSITINGWLRDFLWAQASQVIQSYGSSLSAYGLFFLGAHFVWAFSLMFLFSGRGYWQELIESIVWAHNKLKVAPATQPRALSIVQGRAVGVTHYLLGGIATTWAFFLARIIAVG.

Helical transmembrane passes span 78 to 101, 164 to 187, 203 to 227, 299 to 317, 354 to 377, 393 to 419, 441 to 463, and 539 to 557; these read VFSA…FHGA, LYCT…FHYH, LNHH…HVSL, IAHH…GHMY, WHAQ…QHMY, LSLF…IFMV, AIIS…LYIH, and FLVH…LILL. Residues Cys-581 and Cys-590 each coordinate [4Fe-4S] cluster. The next 2 membrane-spanning stretches (helical) occupy residues 597-618 and 672-694; these read HVFL…HFSW and LSAY…MFLF. His-683 is a binding site for chlorophyll a'. Chlorophyll a is bound by residues Met-691 and Tyr-699. Residue Trp-700 participates in phylloquinone binding. A helical transmembrane segment spans residues 732–753; sequence AVGVTHYLLGGIATTWAFFLAR.

The protein belongs to the PsaA/PsaB family. The PsaA/B heterodimer binds the P700 chlorophyll special pair and subsequent electron acceptors. PSI consists of a core antenna complex that captures photons, and an electron transfer chain that converts photonic excitation into a charge separation. The eukaryotic PSI reaction center is composed of at least 11 subunits. Requires P700 is a chlorophyll a/chlorophyll a' dimer, A0 is one or more chlorophyll a, A1 is one or both phylloquinones and FX is a shared 4Fe-4S iron-sulfur center. as cofactor.

The protein resides in the plastid. It localises to the chloroplast thylakoid membrane. It catalyses the reaction reduced [plastocyanin] + hnu + oxidized [2Fe-2S]-[ferredoxin] = oxidized [plastocyanin] + reduced [2Fe-2S]-[ferredoxin]. In terms of biological role, psaA and PsaB bind P700, the primary electron donor of photosystem I (PSI), as well as the electron acceptors A0, A1 and FX. PSI is a plastocyanin-ferredoxin oxidoreductase, converting photonic excitation into a charge separation, which transfers an electron from the donor P700 chlorophyll pair to the spectroscopically characterized acceptors A0, A1, FX, FA and FB in turn. Oxidized P700 is reduced on the lumenal side of the thylakoid membrane by plastocyanin. This is Photosystem I P700 chlorophyll a apoprotein A1 from Pisum sativum (Garden pea).